A 116-amino-acid polypeptide reads, in one-letter code: Large ribosomal subunit protein bL19 (116 aa).

It belongs to the bacterial ribosomal protein bL19 family.

This protein is located at the 30S-50S ribosomal subunit interface and may play a role in the structure and function of the aminoacyl-tRNA binding site. The protein is Large ribosomal subunit protein bL19 of Blochmanniella pennsylvanica (strain BPEN).